Consider the following 289-residue polypeptide: Bifunctional protein FolD (289 aa).

NADP(+) is bound by residues Gly-166–Ser-168, Ser-191, and Ile-232.

Belongs to the tetrahydrofolate dehydrogenase/cyclohydrolase family. Homodimer.

The catalysed reaction is (6R)-5,10-methylene-5,6,7,8-tetrahydrofolate + NADP(+) = (6R)-5,10-methenyltetrahydrofolate + NADPH. The enzyme catalyses (6R)-5,10-methenyltetrahydrofolate + H2O = (6R)-10-formyltetrahydrofolate + H(+). It participates in one-carbon metabolism; tetrahydrofolate interconversion. Its function is as follows. Catalyzes the oxidation of 5,10-methylenetetrahydrofolate to 5,10-methenyltetrahydrofolate and then the hydrolysis of 5,10-methenyltetrahydrofolate to 10-formyltetrahydrofolate. This Synechococcus elongatus (strain ATCC 33912 / PCC 7942 / FACHB-805) (Anacystis nidulans R2) protein is Bifunctional protein FolD.